We begin with the raw amino-acid sequence, 364 residues long: CCA-adding enzyme (364 aa).

Positions 19 and 22 each coordinate ATP. CTP is bound by residues Gly19 and Arg22. Mg(2+) contacts are provided by Asp32 and Asp34. ATP-binding residues include Arg102, Arg148, and Arg151. Arg102, Arg148, and Arg151 together coordinate CTP.

The protein belongs to the tRNA nucleotidyltransferase/poly(A) polymerase family. Bacterial CCA-adding enzyme type 2 subfamily. It depends on Mg(2+) as a cofactor.

It catalyses the reaction a tRNA precursor + 2 CTP + ATP = a tRNA with a 3' CCA end + 3 diphosphate. The enzyme catalyses a tRNA with a 3' CCA end + 2 CTP + ATP = a tRNA with a 3' CCACCA end + 3 diphosphate. Functionally, catalyzes the addition and repair of the essential 3'-terminal CCA sequence in tRNAs without using a nucleic acid template. Adds these three nucleotides in the order of C, C, and A to the tRNA nucleotide-73, using CTP and ATP as substrates and producing inorganic pyrophosphate. tRNA 3'-terminal CCA addition is required both for tRNA processing and repair. Also involved in tRNA surveillance by mediating tandem CCA addition to generate a CCACCA at the 3' terminus of unstable tRNAs. While stable tRNAs receive only 3'-terminal CCA, unstable tRNAs are marked with CCACCA and rapidly degraded. The polypeptide is CCA-adding enzyme (Bordetella pertussis (strain Tohama I / ATCC BAA-589 / NCTC 13251)).